Here is a 1070-residue protein sequence, read N- to C-terminus: DNA-directed RNA polymerase subunit beta (1070 aa).

It belongs to the RNA polymerase beta chain family. As to quaternary structure, in plastids the minimal PEP RNA polymerase catalytic core is composed of four subunits: alpha, beta, beta', and beta''. When a (nuclear-encoded) sigma factor is associated with the core the holoenzyme is formed, which can initiate transcription.

The protein resides in the plastid. It localises to the chloroplast. The catalysed reaction is RNA(n) + a ribonucleoside 5'-triphosphate = RNA(n+1) + diphosphate. Its function is as follows. DNA-dependent RNA polymerase catalyzes the transcription of DNA into RNA using the four ribonucleoside triphosphates as substrates. The chain is DNA-directed RNA polymerase subunit beta from Gossypium barbadense (Sea Island cotton).